A 670-amino-acid chain; its full sequence is Transketolase, chromosomal (670 aa).

His-32 contributes to the substrate binding site. Thiamine diphosphate-binding positions include His-72 and 120–122 (GPL). Asp-161 serves as a coordination point for Mg(2+). Residues Gly-162 and Asn-191 each contribute to the thiamine diphosphate site. Residues Asn-191 and Ile-193 each coordinate Mg(2+). His-267, Arg-364, and Ser-391 together coordinate substrate. His-267 is a binding site for thiamine diphosphate. Catalysis depends on Glu-417, which acts as the Proton donor. A thiamine diphosphate-binding site is contributed by Phe-443. Residues His-467, Asp-475, and Arg-526 each coordinate substrate.

It belongs to the transketolase family. As to quaternary structure, homodimer. Requires Mg(2+) as cofactor. It depends on Ca(2+) as a cofactor. Mn(2+) serves as cofactor. Co(2+) is required as a cofactor. The cofactor is thiamine diphosphate.

The enzyme catalyses D-sedoheptulose 7-phosphate + D-glyceraldehyde 3-phosphate = aldehydo-D-ribose 5-phosphate + D-xylulose 5-phosphate. Its pathway is carbohydrate biosynthesis; Calvin cycle. Its function is as follows. Catalyzes the transfer of a two-carbon ketol group from a ketose donor to an aldose acceptor, via a covalent intermediate with the cofactor thiamine pyrophosphate. This is Transketolase, chromosomal (cbbTC) from Cupriavidus necator (strain ATCC 17699 / DSM 428 / KCTC 22496 / NCIMB 10442 / H16 / Stanier 337) (Ralstonia eutropha).